A 377-amino-acid chain; its full sequence is Erythronate-4-phosphate dehydrogenase (377 aa).

Positions 45 and 67 each coordinate substrate. Residues 127–128, Asp-147, and Thr-176 each bind NAD(+); that span reads QV. Arg-209 is an active-site residue. Asp-233 contacts NAD(+). Glu-238 is an active-site residue. Catalysis depends on His-255, which acts as the Proton donor. Gly-258 provides a ligand contact to NAD(+). Tyr-259 provides a ligand contact to substrate.

Belongs to the D-isomer specific 2-hydroxyacid dehydrogenase family. PdxB subfamily. Homodimer.

The protein localises to the cytoplasm. It carries out the reaction 4-phospho-D-erythronate + NAD(+) = (R)-3-hydroxy-2-oxo-4-phosphooxybutanoate + NADH + H(+). It functions in the pathway cofactor biosynthesis; pyridoxine 5'-phosphate biosynthesis; pyridoxine 5'-phosphate from D-erythrose 4-phosphate: step 2/5. Functionally, catalyzes the oxidation of erythronate-4-phosphate to 3-hydroxy-2-oxo-4-phosphonooxybutanoate. In Vibrio vulnificus (strain YJ016), this protein is Erythronate-4-phosphate dehydrogenase.